Here is a 466-residue protein sequence, read N- to C-terminus: Ribulose bisphosphate carboxylase large chain (466 aa).

Lysine 5 bears the N6,N6,N6-trimethyllysine mark. The substrate site is built by asparagine 114 and threonine 164. The active-site Proton acceptor is lysine 166. Position 168 (lysine 168) interacts with substrate. Mg(2+) contacts are provided by lysine 192, aspartate 194, and glutamate 195. The residue at position 192 (lysine 192) is an N6-carboxylysine. Histidine 285 acts as the Proton acceptor in catalysis. The substrate site is built by arginine 286, histidine 318, and serine 370.

It belongs to the RuBisCO large chain family. Type I subfamily. As to quaternary structure, heterohexadecamer of 8 large chains and 8 small chains; disulfide-linked. The disulfide link is formed within the large subunit homodimers. Mg(2+) is required as a cofactor. Post-translationally, the disulfide bond which can form in the large chain dimeric partners within the hexadecamer appears to be associated with oxidative stress and protein turnover.

It localises to the plastid. It is found in the chloroplast. It carries out the reaction 2 (2R)-3-phosphoglycerate + 2 H(+) = D-ribulose 1,5-bisphosphate + CO2 + H2O. The catalysed reaction is D-ribulose 1,5-bisphosphate + O2 = 2-phosphoglycolate + (2R)-3-phosphoglycerate + 2 H(+). In terms of biological role, ruBisCO catalyzes two reactions: the carboxylation of D-ribulose 1,5-bisphosphate, the primary event in carbon dioxide fixation, as well as the oxidative fragmentation of the pentose substrate in the photorespiration process. Both reactions occur simultaneously and in competition at the same active site. The polypeptide is Ribulose bisphosphate carboxylase large chain (Hedera helix (English ivy)).